The sequence spans 262 residues: Ribose-5-phosphate isomerase A (262 aa).

Substrate is bound by residues 33 to 36 (TGST), 89 to 92 (DGAD), and 102 to 105 (KGGG). The active-site Proton acceptor is the Glu-111. Position 129 (Lys-129) interacts with substrate.

It belongs to the ribose 5-phosphate isomerase family. Homodimer.

It catalyses the reaction aldehydo-D-ribose 5-phosphate = D-ribulose 5-phosphate. Its pathway is carbohydrate degradation; pentose phosphate pathway; D-ribose 5-phosphate from D-ribulose 5-phosphate (non-oxidative stage): step 1/1. In terms of biological role, catalyzes the reversible conversion of ribose-5-phosphate to ribulose 5-phosphate. The chain is Ribose-5-phosphate isomerase A from Cereibacter sphaeroides (strain KD131 / KCTC 12085) (Rhodobacter sphaeroides).